The sequence spans 578 residues: Asparagine synthetase [glutamine-hydrolyzing] 3 (578 aa).

Cys2 functions as the For GATase activity in the catalytic mechanism. In terms of domain architecture, Glutamine amidotransferase type-2 spans 2–185 (CGILAVLGCV…PGHIYSSKQG (184 aa)). Residues 50–54 (RLAIV), 75–77 (NGE), and Asp98 contribute to the L-glutamine site. One can recognise an Asparagine synthetase domain in the interval 210 to 450 (VRNTFEKAVI…LPKHILYRQK (241 aa)). Residues Leu231, Ile267, and 341–342 (SG) each bind ATP. Positions 555–572 (GEDKTEDSRPEKLQKLAE) are enriched in basic and acidic residues. The segment at 555–578 (GEDKTEDSRPEKLQKLAEKTPAIV) is disordered.

It catalyses the reaction L-aspartate + L-glutamine + ATP + H2O = L-asparagine + L-glutamate + AMP + diphosphate + H(+). It participates in amino-acid biosynthesis; L-asparagine biosynthesis. In terms of biological role, essential for nitrogen assimilation, distribution and remobilization within the plant via the phloem. This chain is Asparagine synthetase [glutamine-hydrolyzing] 3 (ASN3), found in Arabidopsis thaliana (Mouse-ear cress).